Consider the following 82-residue polypeptide: RNA-binding protein Hfq (82 aa).

In terms of domain architecture, Sm spans 9–68; it reads DPFLNTLRKEHVPVSIYLVNGIKLQGKVDSFDQYVIMLKNTVSQMVYKHAISTIVPGRPV.

This sequence belongs to the Hfq family. In terms of assembly, homohexamer.

Its function is as follows. RNA chaperone that binds small regulatory RNA (sRNAs) and mRNAs to facilitate mRNA translational regulation in response to envelope stress, environmental stress and changes in metabolite concentrations. Also binds with high specificity to tRNAs. In Methylococcus capsulatus (strain ATCC 33009 / NCIMB 11132 / Bath), this protein is RNA-binding protein Hfq.